Here is a 287-residue protein sequence, read N- to C-terminus: MSYNVRAAIIGGTGLYSLEGMELIEEIFPDTPWGKPSDKIKIGKYKGKLIAFLPRHGIGHFLSPPEVPNHANICALKQLGVEEIVAFSSVGSLREEIKPLDFVLPSQIIDRTRFRNSTYFGNGVVAHAPFAEPFSPNLSKRIAQTAKKIGLEIHLDKTLVCMEGPLFSTKAESHLYRSWGADIINMTVLPEAKLAREAEIAYQMICMSTDYDCWREGEESVTVEMVIANLTKNAETAKKLLSELIHVLGNGDDLSLKNSTRYSIITAPEKRNSETVKKLRVLFPEYF.

Phosphate is bound by residues Thr13 and 55–56 (RH). Substrate is bound at residue Met186. Phosphate is bound at residue Thr187. Residue 210–212 (DYD) coordinates substrate.

It belongs to the PNP/MTAP phosphorylase family. MTAP subfamily. As to quaternary structure, homohexamer. Dimer of a homotrimer.

The enzyme catalyses S-methyl-5'-thioadenosine + phosphate = 5-(methylsulfanyl)-alpha-D-ribose 1-phosphate + adenine. The protein operates within amino-acid biosynthesis; L-methionine biosynthesis via salvage pathway; S-methyl-5-thio-alpha-D-ribose 1-phosphate from S-methyl-5'-thioadenosine (phosphorylase route): step 1/1. Catalyzes the reversible phosphorylation of S-methyl-5'-thioadenosine (MTA) to adenine and 5-methylthioribose-1-phosphate. Involved in the breakdown of MTA, a major by-product of polyamine biosynthesis. Responsible for the first step in the methionine salvage pathway after MTA has been generated from S-adenosylmethionine. Has broad substrate specificity with 6-aminopurine nucleosides as preferred substrates. The polypeptide is S-methyl-5'-thioadenosine phosphorylase (Leptospira interrogans serogroup Icterohaemorrhagiae serovar Lai (strain 56601)).